A 168-amino-acid polypeptide reads, in one-letter code: NADH-quinone oxidoreductase subunit E 2 (168 aa).

Positions 77, 82, 118, and 122 each coordinate [2Fe-2S] cluster.

The protein belongs to the complex I 24 kDa subunit family. Requires [2Fe-2S] cluster as cofactor.

The catalysed reaction is a quinone + NADH + 5 H(+)(in) = a quinol + NAD(+) + 4 H(+)(out). Its function is as follows. NDH-1 shuttles electrons from NADH, via FMN and iron-sulfur (Fe-S) centers, to quinones in the respiratory chain. The immediate electron acceptor for the enzyme in this species is believed to be ubiquinone. Couples the redox reaction to proton translocation (for every two electrons transferred, four hydrogen ions are translocated across the cytoplasmic membrane), and thus conserves the redox energy in a proton gradient. This Rhizobium meliloti (strain 1021) (Ensifer meliloti) protein is NADH-quinone oxidoreductase subunit E 2 (nuoE2).